Here is a 621-residue protein sequence, read N- to C-terminus: pH-response transcription factor pacc-1 (621 aa).

Over residues 1-14 (MSSTPAQENGTVNG) the composition is skewed to polar residues. The disordered stretch occupies residues 1–87 (MSSTPAQENG…PTTASNSSAP (87 aa)). Positions 15–87 (ANAAPAPAPA…PTTASNSSAP (73 aa)) are enriched in low complexity. 3 consecutive C2H2-type zinc fingers follow at residues 95-120 (LVCR…CEKH), 131-155 (LTCQ…VRVH), and 161-183 (HKCD…VKTH). Disordered stretches follow at residues 395–539 (PTYA…PETY) and 566–621 (DEDD…PRIN). Low complexity-rich tracts occupy residues 409 to 423 (ASLA…PHSA) and 436 to 465 (SYTS…VSYP). The YPX[LI] motif 1 signature appears at 464–467 (YPTL). Positions 476 to 486 (PSTSGLGSNFT) are enriched in polar residues. Over residues 502–511 (RAADEADRAP) the composition is skewed to basic and acidic residues. Polar residues predominate over residues 515–525 (ASEQATVSSPS). Positions 583–595 (RNQQQRNQQQQQQ) are enriched in low complexity. The YPX[LI] motif 2 motif lies at 614 to 617 (YPVL).

Belongs to the pacC/RIM101 family. Binds to DNA. Interacts with palA/prr-1, which binds to the two YPX[LI] motifs and is required for proteolytic processing. Post-translationally, activated by C-terminal proteolytic cleavage by signaling protease (probably palB/RIM13) at neutral to alkaline ambient pH.

The protein resides in the cytoplasm. It is found in the nucleus. Transcription factor that mediates regulation of both acid- and alkaline-expressed genes in response to ambient pH. At alkaline ambient pH, activates transcription of alkaline-expressed genes (including pacc-1 itself) and represses transcription of acid-expressed genes. The protein is pH-response transcription factor pacc-1 (pacc-1) of Neurospora crassa (strain ATCC 24698 / 74-OR23-1A / CBS 708.71 / DSM 1257 / FGSC 987).